A 273-amino-acid chain; its full sequence is 3-methyl-2-oxobutanoate hydroxymethyltransferase (273 aa).

Positions 49 and 88 each coordinate Mg(2+). Residues D49 to S50, D88, and K118 contribute to the 3-methyl-2-oxobutanoate site. Mg(2+) is bound at residue E120. The Proton acceptor role is filled by E187.

This sequence belongs to the PanB family. In terms of assembly, homodecamer; pentamer of dimers. It depends on Mg(2+) as a cofactor.

The protein localises to the cytoplasm. It carries out the reaction 3-methyl-2-oxobutanoate + (6R)-5,10-methylene-5,6,7,8-tetrahydrofolate + H2O = 2-dehydropantoate + (6S)-5,6,7,8-tetrahydrofolate. Its pathway is cofactor biosynthesis; (R)-pantothenate biosynthesis; (R)-pantoate from 3-methyl-2-oxobutanoate: step 1/2. Its function is as follows. Catalyzes the reversible reaction in which hydroxymethyl group from 5,10-methylenetetrahydrofolate is transferred onto alpha-ketoisovalerate to form ketopantoate. The polypeptide is 3-methyl-2-oxobutanoate hydroxymethyltransferase (Rhizobium etli (strain ATCC 51251 / DSM 11541 / JCM 21823 / NBRC 15573 / CFN 42)).